The primary structure comprises 100 residues: Enhancer of yellow 2 transcription factor (100 aa).

Belongs to the ENY2 family. Component of the nuclear pore complex (NPC)-associated AMEX complex (anchoring and mRNA export complex), composed of at least e(y)2 and xmas-2. Component of the SAGA transcription coactivator-HAT complexes, at least composed of Ada2b, e(y)2, Pcaf/Gcn5, Taf10 and Nipped-A/Trrap. Within the SAGA complex, e(y)2, Sgf11, and not/nonstop form an additional subcomplex of SAGA called the DUB module (deubiquitination module). Component of the THO complex, composed of at least e(y)2, HPR1, THO2, THOC5, THOC6 and THOC7. Interacts with e(y)1. Interacts with su(Hw) (via zinc fingers). Interacts with xmas-2; required for localization to the nuclear periphery. Interacts with the nuclear pore complex (NPC).

The protein localises to the nucleus. The protein resides in the nucleoplasm. It is found in the cytoplasm. Involved in mRNA export coupled transcription activation by association with both the AMEX and the SAGA complexes. The SAGA complex is a multiprotein complex that activates transcription by remodeling chromatin and mediating histone acetylation and deubiquitination. Within the SAGA complex, participates in a subcomplex that specifically deubiquitinates histone H2B. The SAGA complex is recruited to specific gene promoters by activators, where it is required for transcription. Required for nuclear receptor-mediated transactivation. Involved in transcription elongation by recruiting the THO complex onto nascent mRNA. The AMEX complex functions in docking export-competent ribonucleoprotein particles (mRNPs) to the nuclear entrance of the nuclear pore complex (nuclear basket). AMEX participates in mRNA export and accurate chromatin positioning in the nucleus by tethering genes to the nuclear periphery. The chain is Enhancer of yellow 2 transcription factor from Drosophila persimilis (Fruit fly).